A 417-amino-acid polypeptide reads, in one-letter code: MDKLKISANGPLNGEITVSGAKNAALPLMCAGLLTSGTLRLKNVPMLADVATTQKLLQGMGARVLTDNISEFEINGGTVNNTCAPYELVRTMRASILVLGPTLARFGEAQVSLPGGCAIGSRPVNQHLKGLEAMGAEIAIEHGYVKAKGKLKGARVAMDVVTVGGTENLLMAATLAEGTTVLENCAIEPEVVDLAECLVKMGAKISGIGTSTMIVEGAGELYGCEHSVVPDRIEAGTFLCAVAITGGRVVLRNAAPKTMEVVLDKLVEAGAVIEAGDDWIAIDMRQRPKAVDIRTVVHPGFPTDMQAQFMALNAVAEGSCRVVETIFENRFMHVPELNRMGANITTEGNTAFVQGVERLSGAVVKATDLRASASLVIAGLAARGETVVERIYHLDRGYENIEKKLGSVGANIERVSG.

22–23 (KN) contributes to the phosphoenolpyruvate binding site. Residue Arg93 participates in UDP-N-acetyl-alpha-D-glucosamine binding. The active-site Proton donor is Cys117. Position 117 is a 2-(S-cysteinyl)pyruvic acid O-phosphothioketal (Cys117). Asp304 and Ile326 together coordinate UDP-N-acetyl-alpha-D-glucosamine.

This sequence belongs to the EPSP synthase family. MurA subfamily.

It is found in the cytoplasm. It catalyses the reaction phosphoenolpyruvate + UDP-N-acetyl-alpha-D-glucosamine = UDP-N-acetyl-3-O-(1-carboxyvinyl)-alpha-D-glucosamine + phosphate. It participates in cell wall biogenesis; peptidoglycan biosynthesis. In terms of biological role, cell wall formation. Adds enolpyruvyl to UDP-N-acetylglucosamine. This is UDP-N-acetylglucosamine 1-carboxyvinyltransferase from Neisseria gonorrhoeae (strain ATCC 700825 / FA 1090).